Reading from the N-terminus, the 363-residue chain is Flagellar P-ring protein (363 aa).

A signal peptide spans 1-20 (MKIKVLLAVALLAMTVPVKA).

This sequence belongs to the FlgI family. In terms of assembly, the basal body constitutes a major portion of the flagellar organelle and consists of four rings (L,P,S, and M) mounted on a central rod.

The protein localises to the periplasm. The protein resides in the bacterial flagellum basal body. Assembles around the rod to form the L-ring and probably protects the motor/basal body from shearing forces during rotation. This chain is Flagellar P-ring protein, found in Shewanella amazonensis (strain ATCC BAA-1098 / SB2B).